Consider the following 332-residue polypeptide: NADH-quinone oxidoreductase subunit H (332 aa).

9 helical membrane-spanning segments follow: residues 4 to 24 (FAFF…IFAS), 44 to 64 (IGPD…MIKL), 78 to 98 (FIFA…LAAI), 120 to 140 (VALL…FLGG), 165 to 185 (VGAL…LVDI), 194 to 214 (FSWL…ALFI), 255 to 275 (IAGA…FWII), 279 to 299 (IMMI…RAAF), and 312 to 332 (YLIL…AVLL).

The protein belongs to the complex I subunit 1 family. As to quaternary structure, NDH-1 is composed of 14 different subunits. Subunits NuoA, H, J, K, L, M, N constitute the membrane sector of the complex.

It is found in the cell inner membrane. It catalyses the reaction a quinone + NADH + 5 H(+)(in) = a quinol + NAD(+) + 4 H(+)(out). NDH-1 shuttles electrons from NADH, via FMN and iron-sulfur (Fe-S) centers, to quinones in the respiratory chain. The immediate electron acceptor for the enzyme in this species is believed to be ubiquinone. Couples the redox reaction to proton translocation (for every two electrons transferred, four hydrogen ions are translocated across the cytoplasmic membrane), and thus conserves the redox energy in a proton gradient. This subunit may bind ubiquinone. This Campylobacter jejuni subsp. doylei (strain ATCC BAA-1458 / RM4099 / 269.97) protein is NADH-quinone oxidoreductase subunit H.